A 401-amino-acid chain; its full sequence is Putative phosphatidylinositol 4-phosphate 5-kinase 11 (401 aa).

The 390-residue stretch at 1–390 (MELRATVENR…RFQDFVSNIF (390 aa)) folds into the PIPK domain. Residues 242-260 (SFKSNSTKSMKTASSSPDR) show a composition bias toward polar residues. The disordered stretch occupies residues 242–268 (SFKSNSTKSMKTASSSPDRSSVAMYSC). An activation loop region spans residues 350–371 (YGMKKRIEHCYKSIQYNSNSIS).

It carries out the reaction a 1,2-diacyl-sn-glycero-3-phospho-(1D-myo-inositol 4-phosphate) + ATP = a 1,2-diacyl-sn-glycero-3-phospho-(1D-myo-inositol-4,5-bisphosphate) + ADP + H(+). The sequence is that of Putative phosphatidylinositol 4-phosphate 5-kinase 11 (PIP5K11) from Arabidopsis thaliana (Mouse-ear cress).